The primary structure comprises 637 residues: 1-deoxy-D-xylulose-5-phosphate synthase (637 aa).

Thiamine diphosphate-binding positions include His76 and 117 to 119 (GHS). Residue Asp148 coordinates Mg(2+). Thiamine diphosphate contacts are provided by residues 149-150 (GA), Asn177, Tyr294, and Glu381. A Mg(2+)-binding site is contributed by Asn177.

It belongs to the transketolase family. DXPS subfamily. Homodimer. It depends on Mg(2+) as a cofactor. Thiamine diphosphate is required as a cofactor.

The catalysed reaction is D-glyceraldehyde 3-phosphate + pyruvate + H(+) = 1-deoxy-D-xylulose 5-phosphate + CO2. The protein operates within metabolic intermediate biosynthesis; 1-deoxy-D-xylulose 5-phosphate biosynthesis; 1-deoxy-D-xylulose 5-phosphate from D-glyceraldehyde 3-phosphate and pyruvate: step 1/1. Functionally, catalyzes the acyloin condensation reaction between C atoms 2 and 3 of pyruvate and glyceraldehyde 3-phosphate to yield 1-deoxy-D-xylulose-5-phosphate (DXP). This is 1-deoxy-D-xylulose-5-phosphate synthase from Neisseria meningitidis serogroup A / serotype 4A (strain DSM 15465 / Z2491).